The following is a 266-amino-acid chain: MWLSDEFPRDLKTLRDRKPLVHHFMNFVVMNDAANVTLAIGASPIMAHAKEEVEELASKANALYINIGTLDEYWVESMIIAGKAASRNNVPILLDPVGAGATRYRTEVVKRILSETEVSVVKGNGGEMLALAGVTGGVKGVDSIVNATMDTAVKIAEEYGVTAVITGPWDYVSDGVRKVIVKNGTPLLQYVTGSGCMVGSVIASFMAINRDFVKASVEGLVAFEIAAEKAEAKSKAPGTFKQYLIDELFNLTGDDYVKMAKVEVVQ.

Residue methionine 46 coordinates substrate. Residues lysine 122 and threonine 166 each contribute to the ATP site. Glycine 193 lines the substrate pocket.

It belongs to the Thz kinase family. The cofactor is Mg(2+).

The catalysed reaction is 5-(2-hydroxyethyl)-4-methylthiazole + ATP = 4-methyl-5-(2-phosphooxyethyl)-thiazole + ADP + H(+). It participates in cofactor biosynthesis; thiamine diphosphate biosynthesis; 4-methyl-5-(2-phosphoethyl)-thiazole from 5-(2-hydroxyethyl)-4-methylthiazole: step 1/1. Its function is as follows. Catalyzes the phosphorylation of the hydroxyl group of 4-methyl-5-beta-hydroxyethylthiazole (THZ). The chain is Hydroxyethylthiazole kinase from Caldivirga maquilingensis (strain ATCC 700844 / DSM 13496 / JCM 10307 / IC-167).